Reading from the N-terminus, the 6733-residue chain is Replicase polyprotein 1ab (6733 aa).

The 182-residue stretch at 1633-1814 folds into the Macro domain; it reads FNQYYEFKVG…QYIEALGVVE (182 aa). Residues 2183 to 2565 form an HD1 region; it reads LTHVNKFKIV…IMLPVFVIIL (383 aa). A run of 10 helical transmembrane segments spans residues 2191–2211, 2219–2239, 2266–2286, 2411–2431, 2521–2541, 2546–2566, 2769–2789, 2937–2957, 2986–3006, and 3022–3042; these read IVVY…DFSL, VFLL…LGLV, GVHW…DFFV, ALWF…PLMF, VAVS…IVVL, FVWF…IILF, VMLI…FMVG, IISP…FLFL, VLFV…LALW, and LFIL…GFVF. The segment at 2769-3042 is HD2; the sequence is VMLIIALGAI…FVLIVGGFVF (274 aa). Residues His-3184, Glu-3222, and Ser-3291 each act as charge relay system; for 3C-like serine proteinase activity in the active site. 7 consecutive transmembrane segments (helical) span residues 3422–3442, 3456–3478, 3486–3506, 3514–3534, 3538–3558, 3573–3593, and 3598–3613; these read SNVS…FLVC, VVLP…VLFW, LAVT…LGLF, VGLI…VVVN, AIFV…LGVV, AVFA…LILF, and LMSF…FRVF. Positions 3430 to 3613 are HD3; it reads NLHFIFSVYF…VVIVLSFRVF (184 aa). The 232-residue stretch at 4442 to 4673 folds into the NiRAN domain; sequence DFKLLRDVWC…AKEMNVPADF (232 aa). In terms of domain architecture, RdRp catalytic spans 4981 to 5132; it reads FDVFGSDYTK…FSKPGALKIF (152 aa). A CV ZBD domain is found at 5289–5404; sequence FDRVCFCCPN…NGVAQLLTPV (116 aa). Positions 5293, 5296, 5304, 5307, 5314, 5317, 5321, 5327, 5336, 5338, 5359, and 5362 each coordinate Zn(2+). The region spanning 5509 to 5688 is the (+)RNA virus helicase ATP-binding domain; sequence NQPWRLATCF…LQLATQKRYL (180 aa). The (+)RNA virus helicase C-terminal domain maps to 5689–5848; the sequence is TACYRCPPQI…FGMEKQSDFN (160 aa). Residues 5846–6059 form the ExoN domain; the sequence is DFNIIPEVAS…YLASYDAAFK (214 aa). Active-site residues include Asp-5860, Glu-5862, and Asp-5961. 3 residues coordinate Zn(2+): His-6025, Cys-6029, and His-6033. Residues His-6037 and Asp-6042 contribute to the active site. Residue Cys-6048 participates in Zn(2+) binding. The NendoU domain occupies 6327–6467; the sequence is LPETLFSTGR…GEDDIQTFYP (141 aa). Active-site residues include His-6363, His-6380, Lys-6412, Lys-6509, Asp-6585, Lys-6613, and Glu-6647. The 265-residue stretch at 6469-6733 folds into the Nidovirus-type SAM-dependent 2'-O-MTase domain; the sequence is KEFIRSYYEW…EVPLLCQMKH (265 aa).

In terms of processing, specific enzymatic cleavages in vivo by its own protease yield mature proteins. 3CL-PRO is autocatalytically processed.

It localises to the host membrane. It catalyses the reaction RNA(n) + a ribonucleoside 5'-triphosphate = RNA(n+1) + diphosphate. The catalysed reaction is ATP + H2O = ADP + phosphate + H(+). Its function is as follows. The 3C-like serine proteinase is responsible for the majority of cleavages. Functionally, the helicase which contains a zinc finger structure displays RNA and DNA duplex-unwinding activities with 5' to 3' polarity. Acts on both ssRNA and dsRNA in a 3' to 5' direction. In terms of biological role, nendoU is a Mn(2+)-dependent, uridylate-specific enzyme, which leaves 2'-3'-cyclic phosphates 5' to the cleaved bond. This Bos taurus (Bovine) protein is Replicase polyprotein 1ab (rep).